The chain runs to 314 residues: tRNA dimethylallyltransferase (314 aa).

Residue 11 to 18 (GPTGSGKT) coordinates ATP. Substrate is bound at residue 13-18 (TGSGKT). Residues 36 to 39 (DSMQ) form an interaction with substrate tRNA region.

The protein belongs to the IPP transferase family. Monomer. The cofactor is Mg(2+).

It carries out the reaction adenosine(37) in tRNA + dimethylallyl diphosphate = N(6)-dimethylallyladenosine(37) in tRNA + diphosphate. Functionally, catalyzes the transfer of a dimethylallyl group onto the adenine at position 37 in tRNAs that read codons beginning with uridine, leading to the formation of N6-(dimethylallyl)adenosine (i(6)A). The polypeptide is tRNA dimethylallyltransferase (Chlamydia trachomatis serovar D (strain ATCC VR-885 / DSM 19411 / UW-3/Cx)).